The following is a 237-amino-acid chain: Concanavalin V (237 aa).

Mn(2+)-binding residues include Glu8 and Asp10. Positions 10, 12, 14, and 19 each coordinate Ca(2+). A carbohydrate is bound at residue Asn14. Residues Asp19 and His24 each coordinate Mn(2+). Residues Gly70, 98 to 100 (GLY), Asp208, and Arg228 contribute to the a carbohydrate site.

The protein belongs to the leguminous lectin family. Homotetramer. Post-translationally, concanavalin A-like lectins of the Diocleinae subtribe undergo proteolytic processing referred to as circular permutation. The propeptide is split into an N-terminal and a C-terminal part, the gamma and beta chain, respectively. These are then religated in beta-gamma order to form the mature alpha chain. The beta and gamma chains can often be detected in cell extracts. Residues 1-118 of the mature chain, as displayed here, probably constitute the beta chain in the propeptide, residues 119-237 the gamma chain.

Functionally, D-mannose/D-glucose-binding lectin which binds alpha-methyl-D-mannoside, D-mannose and D-glucose in that order. Also binds to serum fetuin and ovalbumin. Has hemagglutinating activity towards rabbit erythrocytes. Is not toxic towards larvae of the brine shrimp Artemia. Induces relaxation in rat endothelized aorta. Shows a transient edematogenic effect in rat. The polypeptide is Concanavalin V (Canavalia cathartica (Jackbean)).